A 219-amino-acid polypeptide reads, in one-letter code: Guanylate kinase (219 aa).

The Guanylate kinase-like domain maps to 15-194 (GLMFVLSSPS…AFESVKAILR (180 aa)). 22–29 (SPSGAGKT) serves as a coordination point for ATP.

The protein belongs to the guanylate kinase family.

It localises to the cytoplasm. It carries out the reaction GMP + ATP = GDP + ADP. In terms of biological role, essential for recycling GMP and indirectly, cGMP. This is Guanylate kinase from Rhodopseudomonas palustris (strain BisB5).